A 541-amino-acid chain; its full sequence is Chaperonin GroEL (541 aa).

Residues 29-32 (TLGP), 86-90 (DGTTT), Gly413, 477-479 (DAL), and Asp493 contribute to the ATP site.

The protein belongs to the chaperonin (HSP60) family. As to quaternary structure, forms a cylinder of 14 subunits composed of two heptameric rings stacked back-to-back. Interacts with the co-chaperonin GroES.

The protein localises to the cytoplasm. It carries out the reaction ATP + H2O + a folded polypeptide = ADP + phosphate + an unfolded polypeptide.. In terms of biological role, together with its co-chaperonin GroES, plays an essential role in assisting protein folding. The GroEL-GroES system forms a nano-cage that allows encapsulation of the non-native substrate proteins and provides a physical environment optimized to promote and accelerate protein folding. This Clostridium beijerinckii (strain ATCC 51743 / NCIMB 8052) (Clostridium acetobutylicum) protein is Chaperonin GroEL.